The following is an 82-amino-acid chain: Small ribosomal subunit protein bS16 (82 aa).

The protein belongs to the bacterial ribosomal protein bS16 family.

The protein is Small ribosomal subunit protein bS16 of Blochmanniella floridana.